A 380-amino-acid polypeptide reads, in one-letter code: Glycogenin-2 (380 aa).

Residues Leu10, Tyr16, and Arg95 each contribute to the UDP site. UDP-alpha-D-glucose is bound by residues Leu10, Tyr16, Arg95, Lys104, Asp120, Ala121, Asp122, Asn158, Thr159, Asp185, Asp188, and Gln189. UDP is bound by residues Asp120, Ala121, and Asp122. A Mn(2+)-binding site is contributed by Asp120. Asp122 serves as a coordination point for Mn(2+). Tyr230 and Tyr232 each carry an O-linked (Glc...) tyrosine glycan. Positions 249, 252, and 255 each coordinate UDP. His249 is a Mn(2+) binding site. Gly252 and Lys255 together coordinate UDP-alpha-D-glucose. Residues 331-355 (SVDRNASQKSTAEKHDIEKPTSKPQ) are disordered. A compositionally biased stretch (basic and acidic residues) spans 341-351 (TAEKHDIEKPT). The O-linked (Glc...) tyrosine glycan is linked to Tyr367.

It belongs to the glycosyltransferase 8 family. Glycogenin subfamily. As to quaternary structure, interacts with glycogen synthase GSY2. Mn(2+) serves as cofactor.

The protein localises to the cytoplasm. The protein resides in the vacuole. It catalyses the reaction L-tyrosyl-[glycogenin] + UDP-alpha-D-glucose = alpha-D-glucosyl-L-tyrosyl-[glycogenin] + UDP + H(+). It carries out the reaction [1,4-alpha-D-glucosyl](n)-L-tyrosyl-[glycogenin] + UDP-alpha-D-glucose = [1,4-alpha-D-glucosyl](n+1)-L-tyrosyl-[glycogenin] + UDP + H(+). Self-glucosylating initiator of glycogen synthesis. It catalyzes the formation of a short alpha (1,4)-glucosyl chain covalently attached via a glucose 1-O-tyrosyl linkage to internal tyrosine residues and these chains act as primers for the elongation reaction catalyzed by glycogen synthase. Capable of transferring glucosyl residues to unbound acceptors such as free oligoglucans or oligoglucan derivatives. This is Glycogenin-2 from Saccharomyces cerevisiae (strain ATCC 204508 / S288c) (Baker's yeast).